The sequence spans 528 residues: Capsid scaffolding protein (528 aa).

Active-site charge relay system residues include histidine 46, serine 116, and histidine 135. Residues 270-288 (HGNYDAVESATATTAMSNQ) form an interaction with pAP region. Positions 394 to 432 (KKRHFQSDSEDELSFPGDPEYTKKRRRHKVDNDDDKEMA) are disordered. Positions 416–422 (KKRRRHK) match the Nuclear localization signal motif. The interaction with major capsid protein stretch occupies residues 508 to 528 (SMDLLKLNKKLFVDALNKMDS).

Belongs to the herpesviridae capsid scaffolding protein family. As to quaternary structure, homomultimer. Interacts with major capsid protein. In terms of assembly, exists in a monomer-dimer equilibrium with the dimer being the active species. Post-translationally, capsid scaffolding protein is cleaved by assemblin after formation of the spherical procapsid. As a result, the capsid obtains its mature, icosahedral shape. Cleavages occur at two or more sites: release (R-site) and maturation (M-site).

The protein localises to the host cytoplasm. It is found in the host nucleus. It catalyses the reaction Cleaves -Ala-|-Ser- and -Ala-|-Ala- bonds in the scaffold protein.. Its function is as follows. Acts as a scaffold protein by binding major capsid protein in the cytoplasm, inducing the nuclear localization of both proteins. Multimerizes in the nucleus such as major capsid protein forms the icosahedral T=16 capsid. Autocatalytic cleavage releases the assembly protein, and subsequently abolishes interaction with major capsid protein. Cleavages products are evicted from the capsid before or during DNA packaging. Functionally, protease that plays an essential role in virion assembly within the nucleus. Catalyzes the cleavage of the assembly protein after formation of the spherical procapsid. By that cleavage, the capsid matures and gains its icosahedral shape. The cleavage sites seem to include -Ala-Ser-, -Ala-Ala-, as well as Ala-Thr bonds. Assemblin and cleavages products are evicted from the capsid before or during DNA packaging. In terms of biological role, plays a major role in capsid assembly. Acts as a scaffold protein by binding major capsid protein. Multimerizes in the nucleus such as major capsid protein forms the icosahedral T=16 capsid. Cleaved by assemblin after capsid completion. The cleavages products are evicted from the capsid before or during DNA packaging. This is Capsid scaffolding protein (U53) from Homo sapiens (Human).